The chain runs to 339 residues: Deoxyhypusine hydroxylase (339 aa).

HEAT-like PBS-type repeat units lie at residues 71 to 97 (LKHE…VVKN) and 104 to 130 (CRHE…LRDD). Fe cation is bound by residues His-73, Glu-74, His-106, and Glu-107. A disordered region spans residues 159-183 (EKLKPSDFTSIDPAPPLPMASSQPS). 3 HEAT-like PBS-type repeats span residues 200 to 233 (QRYR…GLKD), 238 to 264 (FRHE…TLSD), and 271 to 298 (VRHE…FLND). Fe cation contacts are provided by His-240, Glu-241, His-273, and Glu-274.

It belongs to the deoxyhypusine hydroxylase family. The cofactor is Fe(2+).

The protein localises to the cytoplasm. It localises to the nucleus. It catalyses the reaction [eIF5A protein]-deoxyhypusine + AH2 + O2 = [eIF5A protein]-hypusine + A + H2O. It participates in protein modification; eIF5A hypusination. Catalyzes the hydroxylation of the N(6)-(4-aminobutyl)-L-lysine intermediate to form hypusine, an essential post-translational modification only found in mature eIF-5A factor. The polypeptide is Deoxyhypusine hydroxylase (lia1) (Aspergillus oryzae (strain ATCC 42149 / RIB 40) (Yellow koji mold)).